The chain runs to 356 residues: Heparan sulfate 2-O-sulfotransferase 1 (356 aa).

The Cytoplasmic portion of the chain corresponds to 1 to 11 (MGLLRIMLPPK). A helical; Signal-anchor for type II membrane protein transmembrane segment spans residues 12–28 (LQLLAVLVFGVAVLFLE). A coiled-coil region spans residues 24–51 (VLFLENQIQKLEESRGKLERAIARHEVR). Topologically, residues 29 to 356 (NQIQKLEESR…FYEKIYPKSN (328 aa)) are lumenal. Adenosine 3',5'-bisphosphate-binding residues include Lys-83, Thr-84, Ala-85, Ser-86, Thr-87, and Ser-88. Residues Asn-108 and Asn-127 are each glycosylated (N-linked (GlcNAc...) asparagine). Residues His-140 and His-142 contribute to the active site. Adenosine 3',5'-bisphosphate contacts are provided by Arg-164 and Ser-172. 2 disulfides stabilise this stretch: Cys-201/Cys-209 and Cys-222/Cys-228. Tyr-279, Ser-285, Thr-290, and Lys-293 together coordinate adenosine 3',5'-bisphosphate.

Belongs to the sulfotransferase 3 family. In terms of assembly, homotrimer. As to expression, expressed in heart, limb, head and trunk. At stages 20 and 24, it is expressed in the most regions of the first and second pharyngeal arche. In both wing and leg buds, it is detected at the overlying ectoderm and mesenchyme throughout stages 21, 23 and 24.

It localises to the golgi apparatus membrane. Its function is as follows. Catalyzes the transfer of a sulfo group from 3'-phospho-5'-adenylyl sulfate (PAPS) to the 2-OH position of iduronic acid (IdoA) or glucuronic acid (GlcA) within the heparan sulfate (HS) chain and participates in HS biosynthesis. This chain is Heparan sulfate 2-O-sulfotransferase 1, found in Gallus gallus (Chicken).